Consider the following 139-residue polypeptide: Large ribosomal subunit protein bL17 (139 aa).

Residues 120-139 form a disordered region; the sequence is EDAKGRDSGPTQDNSEAEAA.

In terms of assembly, part of the 50S ribosomal subunit. Contacts protein L32. May be methylated thrice, on undetermined residues.

The sequence is that of Large ribosomal subunit protein bL17 from Rhodopseudomonas palustris (strain ATCC BAA-98 / CGA009).